Here is a 650-residue protein sequence, read N- to C-terminus: Primary amine oxidase 1 (650 aa).

The N-terminal stretch at 1-19 (MNTSILAILFLIQCVFTLG) is a signal peptide. Residues Asn2, Asn34, Asn62, and Asn149 are each glycosylated (N-linked (GlcNAc...) asparagine). Cys155 and Cys176 are oxidised to a cystine. A glycan (N-linked (GlcNAc...) asparagine) is linked at Asn235. 308 to 319 (FMDIGEFGFGRS) lines the substrate pocket. The active-site Proton acceptor is the Asp310. Cysteines 329 and 355 form a disulfide. Residue 395–400 (LGNYDY) participates in substrate binding. Catalysis depends on Tyr398, which acts as the Schiff-base intermediate with substrate; via topaquinone. Tyr398 carries the post-translational modification 2',4',5'-topaquinone. Cu cation-binding residues include His453 and His455. Mn(2+) is bound by residues Asp462 and Asp464. A glycan (N-linked (GlcNAc...) asparagine) is linked at Asn486. Mn(2+)-binding residues include Asp607 and Ile608. His618 is a binding site for Cu cation.

Belongs to the copper/topaquinone oxidase family. As to quaternary structure, homodimer. It depends on L-topaquinone as a cofactor. The cofactor is Cu cation. Zn(2+) serves as cofactor. Requires Mn(2+) as cofactor. Post-translationally, topaquinone (TPQ) is generated by copper-dependent autoxidation of a specific tyrosyl residue. Expressed in the vascular tissues at the division/differentiation transition zone.

The protein resides in the secreted. It carries out the reaction a primary methyl amine + O2 + H2O = an aldehyde + H2O2 + NH4(+). Repressed by semi-carbazide, a specific and irreversible inhibitor of copper amine oxidases. Functionally, oxidizes preferentially the aliphatic diamine putrescine with production of the corresponding aldehyde, ammonia and hydrogen peroxide. May be involved in the regulation of developmental programmed cell death (PCD) in both vascular tissue and the root cap. Required for jasmonic acid-(MeJA) mediated early protoxylem differentiation associated with putrescine levels reduction and H(2)O(2) accumulation in roots. The chain is Primary amine oxidase 1 from Arabidopsis thaliana (Mouse-ear cress).